Reading from the N-terminus, the 244-residue chain is tRNA pseudouridine synthase A (244 aa).

D52 serves as the catalytic Nucleophile. Y111 lines the substrate pocket.

It belongs to the tRNA pseudouridine synthase TruA family. As to quaternary structure, homodimer.

It carries out the reaction uridine(38/39/40) in tRNA = pseudouridine(38/39/40) in tRNA. In terms of biological role, formation of pseudouridine at positions 38, 39 and 40 in the anticodon stem and loop of transfer RNAs. The sequence is that of tRNA pseudouridine synthase A from Thermosipho melanesiensis (strain DSM 12029 / CIP 104789 / BI429).